A 123-amino-acid polypeptide reads, in one-letter code: Small ribosomal subunit protein uS12 (123 aa).

Residues 11-32 (PRQEKTYREKARHLGASPQKRG) form a disordered region. At Asp89 the chain carries 3-methylthioaspartic acid.

It belongs to the universal ribosomal protein uS12 family. Part of the 30S ribosomal subunit. Contacts proteins S8 and S17. May interact with IF1 in the 30S initiation complex.

In terms of biological role, with S4 and S5 plays an important role in translational accuracy. Functionally, interacts with and stabilizes bases of the 16S rRNA that are involved in tRNA selection in the A site and with the mRNA backbone. Located at the interface of the 30S and 50S subunits, it traverses the body of the 30S subunit contacting proteins on the other side and probably holding the rRNA structure together. The combined cluster of proteins S8, S12 and S17 appears to hold together the shoulder and platform of the 30S subunit. The polypeptide is Small ribosomal subunit protein uS12 (Methylocella silvestris (strain DSM 15510 / CIP 108128 / LMG 27833 / NCIMB 13906 / BL2)).